We begin with the raw amino-acid sequence, 332 residues long: Tryptophan--tRNA ligase (332 aa).

ATP contacts are provided by residues Lys13–Ser15 and Gly21–Asn22. The 'HIGH' region signature appears at Pro14–Asn22. Asp137 provides a ligand contact to L-tryptophan. ATP-binding positions include Gly149–Asp151, Ile188, and Lys197–Ser201. The 'KMSKS' region signature appears at Lys197–Ser201.

The protein belongs to the class-I aminoacyl-tRNA synthetase family. As to quaternary structure, homodimer.

The protein resides in the cytoplasm. It catalyses the reaction tRNA(Trp) + L-tryptophan + ATP = L-tryptophyl-tRNA(Trp) + AMP + diphosphate + H(+). In terms of biological role, catalyzes the attachment of tryptophan to tRNA(Trp). The chain is Tryptophan--tRNA ligase from Clostridium perfringens (strain 13 / Type A).